Reading from the N-terminus, the 425-residue chain is Apolipoprotein N-acyltransferase (425 aa).

The next 6 membrane-spanning stretches (helical) occupy residues 12–32 (LLACMFVSSVYVNAVLDAYAI), 34–54 (NPYISITLTSLLAPLSMLAFL), 60–80 (SAFALGFFVGALLFYWCALSF), 88–108 (LLPLIIVLIALVYGVLFYLLL), 120–140 (FLGSSFIHPFGFDWLVPDSFF), and 142–162 (YSVFRVDKLSLGLVFLACIFL). A CN hydrolase domain is found at 201-425 (VSTKTPQDLK…LGDILFRKRS (225 aa)). Glutamate 242 functions as the Proton acceptor in the catalytic mechanism. Residue lysine 296 is part of the active site. Residue cysteine 349 is the Nucleophile of the active site.

It belongs to the CN hydrolase family. Apolipoprotein N-acyltransferase subfamily.

It is found in the cell inner membrane. It carries out the reaction N-terminal S-1,2-diacyl-sn-glyceryl-L-cysteinyl-[lipoprotein] + a glycerophospholipid = N-acyl-S-1,2-diacyl-sn-glyceryl-L-cysteinyl-[lipoprotein] + a 2-acyl-sn-glycero-3-phospholipid + H(+). It functions in the pathway protein modification; lipoprotein biosynthesis (N-acyl transfer). In terms of biological role, catalyzes the phospholipid dependent N-acylation of the N-terminal cysteine of apolipoprotein, the last step in lipoprotein maturation. In Helicobacter pylori (strain ATCC 700392 / 26695) (Campylobacter pylori), this protein is Apolipoprotein N-acyltransferase.